The sequence spans 352 residues: MKKIVFTGGGTVGHVTLNLLLMPKFIEDGWEVHYIGDKRGIEHQEILKSGLDVTFHSIATGKLRRYFSWQNMLDVFKVGWGIVQSLFIMLRLRPQTLFSKGGFVSVPPVIAARVSGVPVFIHESDLSMGLANKIAYKFATKMYSTFEQASSLSKVEHVGAVTKVSDQKNPEPDELVDIQTHFNPKLPTVLFVGGSAGARVFNQLVTDHKKELTERYNIINLTGDSSLNELSQNLFRVDYVTDLYQPLMELADIVVTRGGANTIFELLAIAKLHVIVPLGREASRGDQIENAAYFVKKGYAEDLQESDLTLDSLEEKLSHLLSHKEDYQAKMKASKELKSLADFYQLLKKDLS.

UDP-N-acetyl-alpha-D-glucosamine contacts are provided by Ser-195 and Gln-287.

The protein belongs to the glycosyltransferase 28 family. MurG subfamily.

Its subcellular location is the cell membrane. It catalyses the reaction Mur2Ac(oyl-L-Ala-gamma-D-Glu-L-Lys-D-Ala-D-Ala)-di-trans,octa-cis-undecaprenyl diphosphate + UDP-N-acetyl-alpha-D-glucosamine = beta-D-GlcNAc-(1-&gt;4)-Mur2Ac(oyl-L-Ala-gamma-D-Glu-L-Lys-D-Ala-D-Ala)-di-trans,octa-cis-undecaprenyl diphosphate + UDP + H(+). It functions in the pathway cell wall biogenesis; peptidoglycan biosynthesis. Cell wall formation. Catalyzes the transfer of a GlcNAc subunit on undecaprenyl-pyrophosphoryl-MurNAc-pentapeptide (lipid intermediate I) to form undecaprenyl-pyrophosphoryl-MurNAc-(pentapeptide)GlcNAc (lipid intermediate II). The chain is UDP-N-acetylglucosamine--N-acetylmuramyl-(pentapeptide) pyrophosphoryl-undecaprenol N-acetylglucosamine transferase from Streptococcus pneumoniae (strain CGSP14).